The following is a 282-amino-acid chain: MQILDGKKLSQKIKESIKKEVEELKKEQDIIPGLAVILVGDDPASHTYVKMKARACKDVGIYSIVHEMPESISQKEIEETISMMNKNPNIDGILVQLPLPKHIDTTKILELIDPAKDVDGFHPYNFGRLMQGLDTFAPCTPLGVMELLDEYGIDVKGMNACVVGASNIVGKPMAALLLNRFATVDICHIYTKDLAEHTKKADIIAVGVGKPNLITADMVKERAIVIDIGINKVGNKIVGDVDFENVSKKASYITPVPGGVGPMTIAMLLKNTIKAAKQRKRS.

Residues 164-166 (GAS), I189, and I230 contribute to the NADP(+) site.

Belongs to the tetrahydrofolate dehydrogenase/cyclohydrolase family. Homodimer.

It catalyses the reaction (6R)-5,10-methylene-5,6,7,8-tetrahydrofolate + NADP(+) = (6R)-5,10-methenyltetrahydrofolate + NADPH. The enzyme catalyses (6R)-5,10-methenyltetrahydrofolate + H2O = (6R)-10-formyltetrahydrofolate + H(+). The protein operates within one-carbon metabolism; tetrahydrofolate interconversion. Catalyzes the oxidation of 5,10-methylenetetrahydrofolate to 5,10-methenyltetrahydrofolate and then the hydrolysis of 5,10-methenyltetrahydrofolate to 10-formyltetrahydrofolate. The chain is Bifunctional protein FolD from Nitratiruptor sp. (strain SB155-2).